The chain runs to 142 residues: Large ribosomal subunit protein uL11 (142 aa).

The protein belongs to the universal ribosomal protein uL11 family. As to quaternary structure, part of the ribosomal stalk of the 50S ribosomal subunit. Interacts with L10 and the large rRNA to form the base of the stalk. L10 forms an elongated spine to which L12 dimers bind in a sequential fashion forming a multimeric L10(L12)X complex. In terms of processing, one or more lysine residues are methylated.

Forms part of the ribosomal stalk which helps the ribosome interact with GTP-bound translation factors. The polypeptide is Large ribosomal subunit protein uL11 (Xanthomonas campestris pv. campestris (strain 8004)).